Here is a 537-residue protein sequence, read N- to C-terminus: Mitochondria-eating protein (537 aa).

Residues 1-273 are interaction with YWHAG/14-3-3 protein gamma; that stretch reads MADNLRRLVS…PCSRSHSRSR (273 aa). Ser-85, Ser-127, Ser-154, and Ser-157 each carry phosphoserine. Residues 115-253 adopt a coiled-coil conformation; it reads GTRDIQQLDA…SAEKSVLQGR (139 aa). Disordered regions lie at residues 171–221 and 249–293; these read QLKS…ANQR and VLQG…AKLS. Positions 179–217 are enriched in basic and acidic residues; that stretch reads EESRHRNSDRRRSEKRGSERRRVELRGSEQRVSDLDRRS. Low complexity predominate over residues 253-287; it reads RSARSRSPSPAPCSRSHSRSRSTSPSSAKARTPSP. 2 positions are modified to phosphoserine: Ser-286 and Ser-508.

The protein belongs to the MIEAP family. In terms of assembly, interacts (via coiled-coil domains) with BNIP3L (via BH3 domain). Interacts (via coiled-coil domains) with BNIP3 (via BH3 domain). Interacts with YWHAG/14-3-3 protein gamma; a protein that also plays a role in MALM.

It is found in the cytoplasm. Its subcellular location is the cytosol. It localises to the mitochondrion outer membrane. The protein resides in the mitochondrion matrix. Its function is as follows. Key regulator of mitochondrial quality that mediates the repairing or degradation of unhealthy mitochondria in response to mitochondrial damage. Mediator of mitochondrial protein catabolic process (also named MALM) by mediating the degradation of damaged proteins inside mitochondria by promoting the accumulation in the mitochondrial matrix of hydrolases that are characteristic of the lysosomal lumen. Also involved in mitochondrion degradation of damaged mitochondria by promoting the formation of vacuole-like structures (named MIV), which engulf and degrade unhealthy mitochondria by accumulating lysosomes. The physical interaction of SPATA18/MIEAP, BNIP3 and BNIP3L/NIX at the mitochondrial outer membrane regulates the opening of a pore in the mitochondrial double membrane in order to mediate the translocation of lysosomal proteins from the cytoplasm to the mitochondrial matrix. Binds cardiolipin. May form molecular condensates (non-membrane-bounded organelles) within mitochondria that compartmentalize and promote cardiolipin metabolism. The sequence is that of Mitochondria-eating protein (SPATA18) from Bos taurus (Bovine).